Consider the following 365-residue polypeptide: Succinyl-diaminopimelate desuccinylase (365 aa).

Histidine 65 lines the Zn(2+) pocket. Aspartate 67 is a catalytic residue. Aspartate 96 lines the Zn(2+) pocket. Residue glutamate 126 is the Proton acceptor of the active site. Zn(2+) is bound by residues glutamate 127, glutamate 155, and histidine 340.

The protein belongs to the peptidase M20A family. DapE subfamily. Homodimer. It depends on Zn(2+) as a cofactor. Co(2+) serves as cofactor.

The enzyme catalyses N-succinyl-(2S,6S)-2,6-diaminopimelate + H2O = (2S,6S)-2,6-diaminopimelate + succinate. The protein operates within amino-acid biosynthesis; L-lysine biosynthesis via DAP pathway; LL-2,6-diaminopimelate from (S)-tetrahydrodipicolinate (succinylase route): step 3/3. In terms of biological role, catalyzes the hydrolysis of N-succinyl-L,L-diaminopimelic acid (SDAP), forming succinate and LL-2,6-diaminopimelate (DAP), an intermediate involved in the bacterial biosynthesis of lysine and meso-diaminopimelic acid, an essential component of bacterial cell walls. This is Succinyl-diaminopimelate desuccinylase from Campylobacter jejuni subsp. jejuni serotype O:23/36 (strain 81-176).